A 141-amino-acid chain; its full sequence is Large ribosomal subunit protein bL17 (141 aa).

The protein belongs to the bacterial ribosomal protein bL17 family. Part of the 50S ribosomal subunit. Contacts protein L32.

This is Large ribosomal subunit protein bL17 from Maridesulfovibrio salexigens (strain ATCC 14822 / DSM 2638 / NCIMB 8403 / VKM B-1763) (Desulfovibrio salexigens).